The following is a 127-amino-acid chain: Fluoride-specific ion channel FluC 1 (127 aa).

3 consecutive transmembrane segments (helical) span residues 6 to 26 (PLVTVETIVLVGLGGFAGSNL), 29 to 49 (FVGLFFPGLQGTLLVNVCGSF), and 95 to 115 (EWAVANVVGSYALGFAGVLVG).

This sequence belongs to the fluoride channel Fluc/FEX (TC 1.A.43) family.

It is found in the cell membrane. The catalysed reaction is fluoride(in) = fluoride(out). Functionally, fluoride-specific ion channel. Important for reducing fluoride concentration in the cell, thus reducing its toxicity. This chain is Fluoride-specific ion channel FluC 1, found in Haloarcula marismortui (strain ATCC 43049 / DSM 3752 / JCM 8966 / VKM B-1809) (Halobacterium marismortui).